The following is a 245-amino-acid chain: Phosphoadenosine 5'-phosphosulfate reductase (245 aa).

Residue cysteine 239 is the Nucleophile; cysteine thiosulfonate intermediate of the active site.

This sequence belongs to the PAPS reductase family. CysH subfamily.

The protein resides in the cytoplasm. It catalyses the reaction [thioredoxin]-disulfide + sulfite + adenosine 3',5'-bisphosphate + 2 H(+) = [thioredoxin]-dithiol + 3'-phosphoadenylyl sulfate. The protein operates within sulfur metabolism; hydrogen sulfide biosynthesis; sulfite from sulfate: step 3/3. In terms of biological role, catalyzes the formation of sulfite from phosphoadenosine 5'-phosphosulfate (PAPS) using thioredoxin as an electron donor. In Alkalilimnicola ehrlichii (strain ATCC BAA-1101 / DSM 17681 / MLHE-1), this protein is Phosphoadenosine 5'-phosphosulfate reductase.